The primary structure comprises 171 residues: Probable chemoreceptor glutamine deamidase CheD 1 (171 aa).

The segment covering 1-18 has biased composition (low complexity); that stretch reads MTRTTGAAPDRAAPAAGE. Residues 1–23 form a disordered region; it reads MTRTTGAAPDRAAPAAGETPGGG.

This sequence belongs to the CheD family.

The catalysed reaction is L-glutaminyl-[protein] + H2O = L-glutamyl-[protein] + NH4(+). Functionally, probably deamidates glutamine residues to glutamate on methyl-accepting chemotaxis receptors (MCPs), playing an important role in chemotaxis. In Anaeromyxobacter dehalogenans (strain 2CP-C), this protein is Probable chemoreceptor glutamine deamidase CheD 1.